The sequence spans 175 residues: ATP synthase subunit delta (175 aa).

Belongs to the ATPase delta chain family. F-type ATPases have 2 components, F(1) - the catalytic core - and F(0) - the membrane proton channel. F(1) has five subunits: alpha(3), beta(3), gamma(1), delta(1), epsilon(1). F(0) has three main subunits: a(1), b(2) and c(10-14). The alpha and beta chains form an alternating ring which encloses part of the gamma chain. F(1) is attached to F(0) by a central stalk formed by the gamma and epsilon chains, while a peripheral stalk is formed by the delta and b chains.

It is found in the cell inner membrane. F(1)F(0) ATP synthase produces ATP from ADP in the presence of a proton or sodium gradient. F-type ATPases consist of two structural domains, F(1) containing the extramembraneous catalytic core and F(0) containing the membrane proton channel, linked together by a central stalk and a peripheral stalk. During catalysis, ATP synthesis in the catalytic domain of F(1) is coupled via a rotary mechanism of the central stalk subunits to proton translocation. Functionally, this protein is part of the stalk that links CF(0) to CF(1). It either transmits conformational changes from CF(0) to CF(1) or is implicated in proton conduction. This chain is ATP synthase subunit delta, found in Xylella fastidiosa (strain M12).